A 307-amino-acid chain; its full sequence is uncharacterized protein (307 aa).

This is an uncharacterized protein from Rickettsia conorii (strain ATCC VR-613 / Malish 7).